We begin with the raw amino-acid sequence, 715 residues long: Probable GTP diphosphokinase RSH3, chloroplastic (715 aa).

Residues 1–64 (MVVATTIALY…LLFSGASVKS (64 aa)) constitute a chloroplast transit peptide. Low complexity predominate over residues 65–74 (SSSSSSSHPS). The disordered stretch occupies residues 65–84 (SSSSSSSHPSVGEELASIRH). The 105-residue stretch at 237-341 (YLQHCVETAM…IKLADRLHNM (105 aa)) folds into the HD domain.

It belongs to the RelA/SpoT family. In terms of tissue distribution, expressed in roots, hypocotyls, shoots, cotyledons, rosette and cauline leaves, stems, petals, sepals, stamens, pistils and siliques.

Its subcellular location is the plastid. It localises to the chloroplast. It carries out the reaction GTP + ATP = guanosine 3'-diphosphate 5'-triphosphate + AMP. Functionally, possesses ppGpp (guanosine 3'-diphosphate 5'-diphosphate) synthetase activity in vitro and is able to functionally complement E.coli relA mutants. May be involved in a rapid plant ppGpp-mediated response to pathogens and other stresses. This is Probable GTP diphosphokinase RSH3, chloroplastic (RSH3) from Arabidopsis thaliana (Mouse-ear cress).